Reading from the N-terminus, the 391-residue chain is Elongation factor Tu (391 aa).

Residues 10-201 enclose the tr-type G domain; the sequence is KPHVNIGTIG…AVDEYIPTPA (192 aa). The tract at residues 19-26 is G1; sequence GHVDHGKT. A GTP-binding site is contributed by 19–26; that stretch reads GHVDHGKT. A Mg(2+)-binding site is contributed by Thr26. Positions 55-59 are G2; that stretch reads GITIS. Residues 76 to 79 are G3; sequence DCPG. GTP-binding positions include 76-80 and 131-134; these read DCPGH and NKVD. The interval 131 to 134 is G4; that stretch reads NKVD. Positions 169–171 are G5; the sequence is SAL.

The protein belongs to the TRAFAC class translation factor GTPase superfamily. Classic translation factor GTPase family. EF-Tu/EF-1A subfamily. As to quaternary structure, monomer.

It localises to the cytoplasm. The enzyme catalyses GTP + H2O = GDP + phosphate + H(+). In terms of biological role, GTP hydrolase that promotes the GTP-dependent binding of aminoacyl-tRNA to the A-site of ribosomes during protein biosynthesis. The chain is Elongation factor Tu from Cereibacter sphaeroides (strain ATCC 17029 / ATH 2.4.9) (Rhodobacter sphaeroides).